We begin with the raw amino-acid sequence, 350 residues long: RING finger protein 44 (350 aa).

Residues 298-339 form an RING-type; atypical zinc finger; it reads CVVCFSDFEVRQLLRVLPCNHEFHAKCVDKWLKANRTCPICR.

This Rattus norvegicus (Rat) protein is RING finger protein 44 (Rnf44).